Here is a 585-residue protein sequence, read N- to C-terminus: Testis-specific serine kinase substrate (585 aa).

The segment covering E91–A108 has biased composition (low complexity). Residues E91–D126 form a disordered region. A phosphoserine mark is found at S224, S281, and S309. 2 disordered regions span residues S262–S309 and L559–Q585.

Phosphorylated on serine residue(s) by STK22A/TSSK1 and STK22B/TSSK2.

The protein localises to the cytoplasm. It is found in the cytoskeleton. Its subcellular location is the microtubule organizing center. The protein resides in the centrosome. It localises to the centriole. May play a role in testicular physiology, most probably in the process of spermatogenesis or spermatid development. The polypeptide is Testis-specific serine kinase substrate (Tsks) (Rattus norvegicus (Rat)).